Reading from the N-terminus, the 320-residue chain is rRNA methyltransferase 2, mitochondrial (320 aa).

The N-terminal 18 residues, 1 to 18 (MILVYNRIRSIISSSLGR), are a transit peptide targeting the mitochondrion. Residues 83 to 86 (PGAW), aspartate 104, 178 to 179 (DI), and aspartate 203 each bind S-adenosyl-L-methionine. Lysine 264 (proton acceptor) is an active-site residue.

This sequence belongs to the class I-like SAM-binding methyltransferase superfamily. RNA methyltransferase RlmE family.

Its subcellular location is the mitochondrion. It catalyses the reaction uridine(2791) in 21S rRNA + S-adenosyl-L-methionine = 2'-O-methyluridine(2791) in 21S rRNA + S-adenosyl-L-homocysteine + H(+). Its function is as follows. S-adenosyl-L-methionine-dependent 2'-O-ribose methyltransferase that catalyzes the formation of 2'-O-methyluridine at position 2791 (Um2791) in the 21S mitochondrial large subunit ribosomal RNA (mtLSU rRNA), a universally conserved modification in the peptidyl transferase domain of the mtLSU rRNA. This chain is rRNA methyltransferase 2, mitochondrial, found in Saccharomyces cerevisiae (strain ATCC 204508 / S288c) (Baker's yeast).